The following is a 262-amino-acid chain: Cell division protein FtsQ (262 aa).

Over 1 to 20 the chain is Cytoplasmic; that stretch reads MSWSDKRRHWRARKSQVNWY. Residues 21–41 traverse the membrane as a helical segment; the sequence is LWSGIGFLSLVIGSFVFGGYL. Residues 42-262 lie on the Periplasmic side of the membrane; sequence LHKFLNDAST…EPIINDEKPR (221 aa). The POTRA domain occupies 52-121; that stretch reads LPIEAVAIKG…AKLRVYLQEQ (70 aa).

Belongs to the FtsQ/DivIB family. FtsQ subfamily. Part of a complex composed of FtsB, FtsL and FtsQ.

Its subcellular location is the cell inner membrane. Its function is as follows. Essential cell division protein. May link together the upstream cell division proteins, which are predominantly cytoplasmic, with the downstream cell division proteins, which are predominantly periplasmic. May control correct divisome assembly. The polypeptide is Cell division protein FtsQ (Shewanella oneidensis (strain ATCC 700550 / JCM 31522 / CIP 106686 / LMG 19005 / NCIMB 14063 / MR-1)).